Reading from the N-terminus, the 366-residue chain is Chorismate synthase (366 aa).

Residues R48 and R54 each contribute to the NADP(+) site. FMN-binding positions include 125 to 127 (RSS), 238 to 239 (NA), G278, 293 to 297 (KPTSS), and R319.

The protein belongs to the chorismate synthase family. Homotetramer. It depends on FMNH2 as a cofactor.

The enzyme catalyses 5-O-(1-carboxyvinyl)-3-phosphoshikimate = chorismate + phosphate. It participates in metabolic intermediate biosynthesis; chorismate biosynthesis; chorismate from D-erythrose 4-phosphate and phosphoenolpyruvate: step 7/7. In terms of biological role, catalyzes the anti-1,4-elimination of the C-3 phosphate and the C-6 proR hydrogen from 5-enolpyruvylshikimate-3-phosphate (EPSP) to yield chorismate, which is the branch point compound that serves as the starting substrate for the three terminal pathways of aromatic amino acid biosynthesis. This reaction introduces a second double bond into the aromatic ring system. This chain is Chorismate synthase, found in Laribacter hongkongensis (strain HLHK9).